The following is a 314-amino-acid chain: Acetyl-coenzyme A carboxylase carboxyl transferase subunit alpha (314 aa).

The CoA carboxyltransferase C-terminal domain maps to 32–289 (EIDMLEASLE…KSAFVAQLDS (258 aa)).

Belongs to the AccA family. Acetyl-CoA carboxylase is a heterohexamer composed of biotin carboxyl carrier protein (AccB), biotin carboxylase (AccC) and two subunits each of ACCase subunit alpha (AccA) and ACCase subunit beta (AccD).

Its subcellular location is the cytoplasm. The catalysed reaction is N(6)-carboxybiotinyl-L-lysyl-[protein] + acetyl-CoA = N(6)-biotinyl-L-lysyl-[protein] + malonyl-CoA. It functions in the pathway lipid metabolism; malonyl-CoA biosynthesis; malonyl-CoA from acetyl-CoA: step 1/1. Component of the acetyl coenzyme A carboxylase (ACC) complex. First, biotin carboxylase catalyzes the carboxylation of biotin on its carrier protein (BCCP) and then the CO(2) group is transferred by the carboxyltransferase to acetyl-CoA to form malonyl-CoA. This Staphylococcus aureus (strain NCTC 8325 / PS 47) protein is Acetyl-coenzyme A carboxylase carboxyl transferase subunit alpha.